Reading from the N-terminus, the 75-residue chain is DNA-directed RNA polymerase subunit omega (75 aa).

It belongs to the RNA polymerase subunit omega family. In terms of assembly, the RNAP catalytic core consists of 2 alpha, 1 beta, 1 beta' and 1 omega subunit. When a sigma factor is associated with the core the holoenzyme is formed, which can initiate transcription.

It carries out the reaction RNA(n) + a ribonucleoside 5'-triphosphate = RNA(n+1) + diphosphate. Functionally, promotes RNA polymerase assembly. Latches the N- and C-terminal regions of the beta' subunit thereby facilitating its interaction with the beta and alpha subunits. This is DNA-directed RNA polymerase subunit omega from Nitratidesulfovibrio vulgaris (strain DSM 19637 / Miyazaki F) (Desulfovibrio vulgaris).